The chain runs to 86 residues: U15-lycotoxin-Ls1d (86 aa).

The N-terminal stretch at 1-20 (MNSKIFAVLLLLGLLSCVLS) is a signal peptide. The region spanning 21–66 (DQYCPKSSITACKKMNIRNDCCKDDDCTGGSWCCATPCGNFCKYPT) is the WAP domain. Cystine bridges form between Cys24-Cys54, Cys32-Cys58, Cys41-Cys53, Cys42-Cys80, and Cys47-Cys62.

It belongs to the venom protein 11 family. 01 (wap-1) subfamily. Contains 5 disulfide bonds. As to expression, expressed by the venom gland.

It is found in the secreted. Its function is as follows. Has antibacterial activity. The sequence is that of U15-lycotoxin-Ls1d from Lycosa singoriensis (Wolf spider).